The sequence spans 183 residues: Large ribosomal subunit protein uL5 (183 aa).

This sequence belongs to the universal ribosomal protein uL5 family. As to quaternary structure, part of the 50S ribosomal subunit; part of the 5S rRNA/L5/L18/L25 subcomplex. Contacts the 5S rRNA and the P site tRNA. Forms a bridge to the 30S subunit in the 70S ribosome.

This is one of the proteins that bind and probably mediate the attachment of the 5S RNA into the large ribosomal subunit, where it forms part of the central protuberance. In the 70S ribosome it contacts protein S13 of the 30S subunit (bridge B1b), connecting the 2 subunits; this bridge is implicated in subunit movement. Contacts the P site tRNA; the 5S rRNA and some of its associated proteins might help stabilize positioning of ribosome-bound tRNAs. This chain is Large ribosomal subunit protein uL5, found in Flavobacterium johnsoniae (strain ATCC 17061 / DSM 2064 / JCM 8514 / BCRC 14874 / CCUG 350202 / NBRC 14942 / NCIMB 11054 / UW101) (Cytophaga johnsonae).